The following is a 284-amino-acid chain: MSVASKNLFDLLGEETPAATTTEKKTAASRDKKRSDSPPVPRELVAQSTTSRKRDPNQPTPRERTVNKKADQPRRRRQAPQGNEAFAREGKEARANNAAHPVDATGAPSNRRNARARRGREFDRHSQTGRVDTKKATERGWGDLVNSAANPDVAENEGNTPSGAQTPAAEEENVKTLDEYLSERKSAAKPVGRTVEKLENATKVEKSAPEELFASLKKSASQKKSAAKESKPKKVLLDIEQTFTARPARGGRPNRAPRRGPSETASKTQQAPPTLSETDFPALA.

The segment at Met-1 to Ala-284 is disordered. Basic and acidic residues predominate over residues Thr-22–Asp-36. Residues Ser-37 and Ser-51 each carry the phosphoserine modification. Composition is skewed to basic and acidic residues over residues Arg-52–Pro-73 and Gly-119–Trp-141. Thr-160 bears the Phosphothreonine mark. Position 162 is a phosphoserine (Ser-162). Thr-166 carries the post-translational modification Phosphothreonine. 2 stretches are compositionally biased toward basic and acidic residues: residues Glu-172–Ser-186 and Thr-194–Pro-209. Residues Ala-214–Lys-224 show a composition bias toward low complexity. Residues Ala-226–Leu-237 show a composition bias toward basic and acidic residues. The segment covering Ala-245–Asn-254 has biased composition (low complexity). Polar residues predominate over residues Glu-263–Glu-277.

This sequence belongs to the STM1 family. Associates with mature 80S ribosomes. Binds to the head domain of the 40S ribosomal subunit and prevents mRNA binding by inserting its alpha-helix domain towards the mRNA entry tunnel at the decoding site, where it blocks the binding of tRNA and mRNA at the A- and P-sites. Interacts with eEF2; interaction sequesters eEF2 at the A-site of the ribosome, thereby blocking the interaction sites of the mRNA-tRNA complex, promoting ribosome stabilization and hibernation. Interacts with sad1. Post-translationally, phosphorylation by TORC1 upon nutrient replenishment inhibits STM1 and causes its release from dormant ribosomes.

The protein resides in the cytoplasm. In terms of biological role, ribosome preservation factor that protect a small pool of nontranslating, vacant ribosomes in cells under nutrient starvation conditions. Under nutrient-limiting conditions, cells reduce ribosome biogenesis and degrade ribosomes via autophagy (ribophagy) or proteasomal degradation. To avoid excessive degradation during starvation, STM1 binds to and protects 80S ribosomes from proteasomal degradation. Under nutrient-sufficient conditions, TORC1 phosphorylates and inhibits STM1 to prevent formation of dormant 80S ribosomes. Acts as an inhibitor of mRNA translation by promoting ribosome hibernation: clamps the two ribosomal subunits, thereby preventing their dissociation, and inhibits translation by excluding mRNA-binding. Acts via its association with eEF2, promoting ribosome stabilization and storage in an inactive state. May also repress translation by preventing association of eEF3 with ribosomes. Binds specifically G4 quadruplex (these are four-stranded right-handed helices, stabilized by guanine base quartets) and purine motif triplex (characterized by a third, antiparallel purine-rich DNA strand located within the major groove of a homopurine stretch of duplex DNA) nucleic acid structures. These structures may be present at telomeres or in rRNAs. Extends chronological lifespan when overexpressed. In Schizosaccharomyces pombe (strain 972 / ATCC 24843) (Fission yeast), this protein is Ribosome-associated protein oga1.